The primary structure comprises 67 residues: Protein AaeX (67 aa).

Helical transmembrane passes span Leu3–Leu23 and Pro47–Val67.

Belongs to the AaeX family.

It localises to the cell membrane. This Escherichia coli O157:H7 protein is Protein AaeX.